Here is a 155-residue protein sequence, read N- to C-terminus: 6,7-dimethyl-8-ribityllumazine synthase (155 aa).

5-amino-6-(D-ribitylamino)uracil is bound by residues W24, A58–E60, and A82–I84. G87 to T88 is a binding site for (2S)-2-hydroxy-3-oxobutyl phosphate. The active-site Proton donor is H90. F115 provides a ligand contact to 5-amino-6-(D-ribitylamino)uracil. Residue R129 participates in (2S)-2-hydroxy-3-oxobutyl phosphate binding.

This sequence belongs to the DMRL synthase family. In terms of assembly, forms an icosahedral capsid composed of 60 subunits, arranged as a dodecamer of pentamers.

It catalyses the reaction (2S)-2-hydroxy-3-oxobutyl phosphate + 5-amino-6-(D-ribitylamino)uracil = 6,7-dimethyl-8-(1-D-ribityl)lumazine + phosphate + 2 H2O + H(+). The protein operates within cofactor biosynthesis; riboflavin biosynthesis; riboflavin from 2-hydroxy-3-oxobutyl phosphate and 5-amino-6-(D-ribitylamino)uracil: step 1/2. Catalyzes the formation of 6,7-dimethyl-8-ribityllumazine by condensation of 5-amino-6-(D-ribitylamino)uracil with 3,4-dihydroxy-2-butanone 4-phosphate. This is the penultimate step in the biosynthesis of riboflavin. In Teredinibacter turnerae (strain ATCC 39867 / T7901), this protein is 6,7-dimethyl-8-ribityllumazine synthase.